The primary structure comprises 407 residues: Argininosuccinate synthase (407 aa).

ATP is bound by residues 10–18 and A37; that span reads AYSGGLDTS. Residues Y88 and S93 each coordinate L-citrulline. Residue G118 participates in ATP binding. T120, N124, and D125 together coordinate L-aspartate. N124 contributes to the L-citrulline binding site. Residues R128, S180, S189, E265, and Y277 each coordinate L-citrulline.

Belongs to the argininosuccinate synthase family. Type 1 subfamily. As to quaternary structure, homotetramer.

The protein resides in the cytoplasm. It catalyses the reaction L-citrulline + L-aspartate + ATP = 2-(N(omega)-L-arginino)succinate + AMP + diphosphate + H(+). It functions in the pathway amino-acid biosynthesis; L-arginine biosynthesis; L-arginine from L-ornithine and carbamoyl phosphate: step 2/3. The chain is Argininosuccinate synthase from Alcanivorax borkumensis (strain ATCC 700651 / DSM 11573 / NCIMB 13689 / SK2).